The sequence spans 831 residues: Probable basic-leucine zipper transcription factor P (831 aa).

Disordered stretches follow at residues 1–33 (MNHR…PSII) and 54–166 (NITS…IASR). The segment covering 54 to 85 (NITSSPSTSSSPPISTTTTTTTTTTTTATAKK) has biased composition (low complexity). Positions 87-96 (NSKEKKKTTN) are enriched in basic and acidic residues. Residues 97–129 (KDNNNNNNNNNSNNQQQQQQQQQQQQQQQQQQQ) show a composition bias toward low complexity. The stretch at 101-141 (NNNNNNNSNNQQQQQQQQQQQQQQQQQQQYEEEDDDEEDEG) forms a coiled coil. Over residues 130–143 (YEEEDDDEEDEGGD) the composition is skewed to acidic residues. Positions 144-154 (DNTKVGKGEKM) are enriched in basic and acidic residues. The bZIP domain maps to 151–214 (GEKMKARRTN…LELLKFSQEV (64 aa)). A basic motif region spans residues 153–173 (KMKARRTNQNIASRNYRQRKK). Positions 176 to 183 (IKEMEDKI) are leucine-zipper. 2 stretches are compositionally biased toward low complexity: residues 469–484 (SSSS…SSTS) and 497–510 (SSSN…SASS). Disordered regions lie at residues 469–510 (SSSS…SASS), 658–697 (QQQA…HQNY), 715–771 (DATN…NTNK), and 787–810 (SLFS…QNDS). The stretch at 601–664 (AQQHAQQQAQ…QAAQQQAAQQ (64 aa)) forms a coiled coil. Low complexity-rich tracts occupy residues 674-695 (PPQH…QQHQ), 720-750 (NNNN…NNNN), and 787-800 (SLFS…NSQS).

It belongs to the bZIP family.

Its subcellular location is the nucleus. In terms of biological role, probable transcriptional regulator. The sequence is that of Probable basic-leucine zipper transcription factor P (bzpP) from Dictyostelium discoideum (Social amoeba).